The sequence spans 145 residues: uncharacterized protein (145 aa).

The helical transmembrane segment at 104 to 124 threads the bilayer; that stretch reads IEVIILSHHFVIGFSFLLGLL.

It is found in the membrane. This is an uncharacterized protein from Saccharomyces cerevisiae (strain ATCC 204508 / S288c) (Baker's yeast).